The following is an 80-amino-acid chain: uncharacterized protein (80 aa).

This is an uncharacterized protein from Haemophilus influenzae (strain ATCC 51907 / DSM 11121 / KW20 / Rd).